We begin with the raw amino-acid sequence, 414 residues long: Probable serine/threonine-protein kinase PBL26 (414 aa).

Residue C3 is the site of S-palmitoyl cysteine attachment. Residues 17-41 (RDSDNSYRRNGEVTGRDNNKTHPEN) show a composition bias toward basic and acidic residues. The segment at 17–55 (RDSDNSYRRNGEVTGRDNNKTHPENPKTVNEQNKNNDED) is disordered. Residues 79–356 (FRQECLIGEG…SDVVTALGFL (278 aa)) form the Protein kinase domain. ATP contacts are provided by residues 85 to 93 (IGEGGFGRV) and K108. Y153 is subject to Phosphotyrosine. The Proton acceptor role is filled by D206. At S240 the chain carries Phosphoserine. At T246 the chain carries Phosphothreonine. Y254 carries the phosphotyrosine modification. Positions 364–394 (ISVPHYDDPPQPSDETSVEDSVAAEERERAV) are disordered.

It belongs to the protein kinase superfamily. Ser/Thr protein kinase family. In terms of processing, palmitoylation at Cys-3 and Cys-6 are required for plasma membrane location.

Its subcellular location is the cell membrane. It carries out the reaction L-seryl-[protein] + ATP = O-phospho-L-seryl-[protein] + ADP + H(+). The enzyme catalyses L-threonyl-[protein] + ATP = O-phospho-L-threonyl-[protein] + ADP + H(+). In terms of biological role, may be involved in plant defense signaling. This chain is Probable serine/threonine-protein kinase PBL26, found in Arabidopsis thaliana (Mouse-ear cress).